A 103-amino-acid polypeptide reads, in one-letter code: Protamine-2 (103 aa).

A disordered region spans residues 1–103 (MVRYRTRSLS…RTRRRRCRRY (103 aa)). Phosphoserine occurs at positions 8 and 10. The span at 8–17 (SLSERPHEVH) shows a compositional bias: basic and acidic residues. Positions 18-29 (GQQVHGQDQGHN) are enriched in low complexity. Phosphoserine is present on Ser-37. Over residues 39–48 (EHVEVYERTH) the composition is skewed to basic and acidic residues. Over residues 49–103 (QGHSHHRRRRCSQRRLHRIHRRRHRSCRRRRRRSCRHRRRHRRGCRTRRRRCRRY) the composition is skewed to basic residues.

It belongs to the protamine P2 family. In terms of assembly, interacts with TDRP. Proteolytic processing into mature chains is required for histone eviction during spermatogenesis. Transition proteins (TNP1 and TNP2) are required for processing. As to expression, testis.

The protein localises to the nucleus. The protein resides in the chromosome. Its function is as follows. Protamines substitute for histones in the chromatin of sperm during the haploid phase of spermatogenesis. They compact sperm DNA into a highly condensed, stable and inactive complex. This Erythrocebus patas (Red guenon) protein is Protamine-2 (PRM2).